The chain runs to 438 residues: Mannan endo-1,4-beta-mannosidase F (438 aa).

The first 17 residues, 1-17, serve as a signal peptide directing secretion; it reads MHPLPSVALLSAIGAVA. The region spanning 19–54 is the CBM1 domain; it reads QVGPWGQCGGRSYTGETSCVSGWSCVLFNEWYSQCQ. Residues 60-96 are ser-rich linker; that stretch reads STSSVSATAAPSSTSSSKESVPSATTSKKPVPTGSSS. The span at 61–86 shows a compositional bias: low complexity; it reads TSSVSATAAPSSTSSSKESVPSATTS. The disordered stretch occupies residues 61-92; it reads TSSVSATAAPSSTSSSKESVPSATTSKKPVPT. The tract at residues 97-438 is catalytic; that stretch reads FVKADGLKFN…CGVADHLSTL (342 aa). Residues Trp-149 and Asn-263 each coordinate substrate. Glu-264 functions as the Proton donor in the catalytic mechanism. An N-linked (GlcNAc...) asparagine glycan is attached at Asn-277. Tyr-339 is a substrate binding site. Glu-373 functions as the Nucleophile in the catalytic mechanism. Residue Trp-402 participates in substrate binding.

Belongs to the glycosyl hydrolase 5 (cellulase A) family.

Its subcellular location is the secreted. It carries out the reaction Random hydrolysis of (1-&gt;4)-beta-D-mannosidic linkages in mannans, galactomannans and glucomannans.. Functionally, endo-1,4-mannanase, a crucial enzyme for depolymerization of seed galactomannans and wood galactoglucomannans. In Aspergillus fumigatus (strain ATCC MYA-4609 / CBS 101355 / FGSC A1100 / Af293) (Neosartorya fumigata), this protein is Mannan endo-1,4-beta-mannosidase F (manF).